The sequence spans 166 residues: Thiol peroxidase (166 aa).

In terms of domain architecture, Thioredoxin spans 18–166 (LKVGDKAPDV…NYEALLKVLK (149 aa)). Residue C60 is the Cysteine sulfenic acid (-SOH) intermediate of the active site. A disulfide bridge links C60 with C94.

It belongs to the peroxiredoxin family. Tpx subfamily. In terms of assembly, homodimer.

It carries out the reaction a hydroperoxide + [thioredoxin]-dithiol = an alcohol + [thioredoxin]-disulfide + H2O. Its function is as follows. Thiol-specific peroxidase that catalyzes the reduction of hydrogen peroxide and organic hydroperoxides to water and alcohols, respectively. Plays a role in cell protection against oxidative stress by detoxifying peroxides. The sequence is that of Thiol peroxidase from Helicobacter pylori (strain ATCC 700392 / 26695) (Campylobacter pylori).